Reading from the N-terminus, the 99-residue chain is NADH-quinone oxidoreductase subunit K (99 aa).

Helical transmembrane passes span 3–23 (PDNY…GVML), 28–48 (IVVF…FVTF), and 59–79 (VIAF…LGII).

The protein belongs to the complex I subunit 4L family. NDH-1 is composed of 14 different subunits. Subunits NuoA, H, J, K, L, M, N constitute the membrane sector of the complex.

Its subcellular location is the cell membrane. It carries out the reaction a quinone + NADH + 5 H(+)(in) = a quinol + NAD(+) + 4 H(+)(out). NDH-1 shuttles electrons from NADH, via FMN and iron-sulfur (Fe-S) centers, to quinones in the respiratory chain. The immediate electron acceptor for the enzyme in this species is believed to be a menaquinone. Couples the redox reaction to proton translocation (for every two electrons transferred, four hydrogen ions are translocated across the cytoplasmic membrane), and thus conserves the redox energy in a proton gradient. This Mycobacteroides abscessus (strain ATCC 19977 / DSM 44196 / CCUG 20993 / CIP 104536 / JCM 13569 / NCTC 13031 / TMC 1543 / L948) (Mycobacterium abscessus) protein is NADH-quinone oxidoreductase subunit K.